Consider the following 229-residue polypeptide: MPTPNQTNFQDAASPLMEELTHFHDHTLMIVFMISLLVLYILLSMLSTKLTHTNTANAQQAEMVWTILPAIILITIALPSLQILYMMDEINKPHMTIKAIGHQWYWTYEYTDYKELEFNSYMIQTQDLPLGHMRLLEVDHRMVTPLESYIRMLISADDVLHSWAIPSLGLKTDAVPGRINQAVFIIMQAGIFYGQCSEICGANHSFMPVVVESLPMNHFDLWLAMIDTL.

Residues 1–14 lie on the Mitochondrial intermembrane side of the membrane; sequence MPTPNQTNFQDAAS. Residues 15–45 traverse the membrane as a helical segment; sequence PLMEELTHFHDHTLMIVFMISLLVLYILLSM. Over 46–59 the chain is Mitochondrial matrix; it reads LSTKLTHTNTANAQ. Residues 60-87 traverse the membrane as a helical segment; it reads QAEMVWTILPAIILITIALPSLQILYMM. Over 88-229 the chain is Mitochondrial intermembrane; that stretch reads DEINKPHMTI…DLWLAMIDTL (142 aa). Positions 161, 196, 198, 200, 204, and 207 each coordinate Cu cation. Residue Glu198 participates in Mg(2+) binding.

Belongs to the cytochrome c oxidase subunit 2 family. Component of the cytochrome c oxidase (complex IV, CIV), a multisubunit enzyme composed of 14 subunits. The complex is composed of a catalytic core of 3 subunits MT-CO1, MT-CO2 and MT-CO3, encoded in the mitochondrial DNA, and 11 supernumerary subunits COX4I, COX5A, COX5B, COX6A, COX6B, COX6C, COX7A, COX7B, COX7C, COX8 and NDUFA4, which are encoded in the nuclear genome. The complex exists as a monomer or a dimer and forms supercomplexes (SCs) in the inner mitochondrial membrane with NADH-ubiquinone oxidoreductase (complex I, CI) and ubiquinol-cytochrome c oxidoreductase (cytochrome b-c1 complex, complex III, CIII), resulting in different assemblies (supercomplex SCI(1)III(2)IV(1) and megacomplex MCI(2)III(2)IV(2)). Found in a complex with TMEM177, COA6, COX18, COX20, SCO1 and SCO2. Interacts with TMEM177 in a COX20-dependent manner. Interacts with COX20. Interacts with COX16. Cu cation is required as a cofactor.

Its subcellular location is the mitochondrion inner membrane. It carries out the reaction 4 Fe(II)-[cytochrome c] + O2 + 8 H(+)(in) = 4 Fe(III)-[cytochrome c] + 2 H2O + 4 H(+)(out). Functionally, component of the cytochrome c oxidase, the last enzyme in the mitochondrial electron transport chain which drives oxidative phosphorylation. The respiratory chain contains 3 multisubunit complexes succinate dehydrogenase (complex II, CII), ubiquinol-cytochrome c oxidoreductase (cytochrome b-c1 complex, complex III, CIII) and cytochrome c oxidase (complex IV, CIV), that cooperate to transfer electrons derived from NADH and succinate to molecular oxygen, creating an electrochemical gradient over the inner membrane that drives transmembrane transport and the ATP synthase. Cytochrome c oxidase is the component of the respiratory chain that catalyzes the reduction of oxygen to water. Electrons originating from reduced cytochrome c in the intermembrane space (IMS) are transferred via the dinuclear copper A center (CU(A)) of subunit 2 and heme A of subunit 1 to the active site in subunit 1, a binuclear center (BNC) formed by heme A3 and copper B (CU(B)). The BNC reduces molecular oxygen to 2 water molecules using 4 electrons from cytochrome c in the IMS and 4 protons from the mitochondrial matrix. This is Cytochrome c oxidase subunit 2 (MT-CO2) from Pelomedusa subrufa (African side-necked turtle).